The primary structure comprises 58 residues: MLGWTLTFLVIALVAGVLGFTGIAGAAAGIAKIIFFVFVVLLLISLVSRALSGKPPRP.

The next 2 helical transmembrane spans lie at 6–26 (LTFL…IAGA) and 27–47 (AAGI…ISLV).

Belongs to the UPF0391 family.

It localises to the cell membrane. This chain is UPF0391 membrane protein Sden_3712, found in Shewanella denitrificans (strain OS217 / ATCC BAA-1090 / DSM 15013).